The primary structure comprises 620 residues: Zinc finger protein GLIS1 (620 aa).

The tract at residues 108–132 (PLTGDLGGPSKRARPGPASTDSHEG) is disordered. The segment at 195-220 (QACRWVDCCAAYEQQEELVRHIEKSH) adopts a C2H2-type 1 zinc-finger fold. Residues 229-256 (FTCFWAGCVRRYKPFNARYKLLIHMRVH) form a C2H2-type 2; atypical zinc finger. C2H2-type zinc fingers lie at residues 262–286 (NKCM…LRSH), 292–316 (YLCQ…QRTH), and 322–346 (YACQ…VKAH). A Bipartite nuclear localization signal motif is present at residues 340-356 (RKHVKAHSAKEQQVRKK). Positions 414 to 515 (ASGLLPPAHD…PPLPSPQGYQ (102 aa)) are disordered. Low complexity predominate over residues 477–488 (SSQSHSPGGQPF). The span at 489 to 510 (PTLPSKPSYPPFQSPPPPPLPS) shows a compositional bias: pro residues.

It belongs to the GLI C2H2-type zinc-finger protein family. As to quaternary structure, interacts with KLF4. Interacts with POU5F1 and/or POU5F1B. Interacts with SOX2.

It localises to the nucleus. In terms of biological role, acts both as a repressor and an activator of transcription. Binds to the consensus sequence 5'-GACCACCCAC-3'. By controlling the expression of genes involved in cell differentiation inhibits the lineage commitment of multipotent cells. Prevents, for instance, the differentiation of multipotent mesenchymal cells into adipocyte and osteoblast. The sequence is that of Zinc finger protein GLIS1 from Homo sapiens (Human).